The primary structure comprises 324 residues: Elongation factor P--(R)-beta-lysine ligase (324 aa).

Residue 75-77 participates in substrate binding; that stretch reads SPE. Residues 99 to 101 and Asn108 each bind ATP; that span reads RNE. Tyr117 is a binding site for substrate. 243–244 provides a ligand contact to ATP; that stretch reads EL. Glu250 serves as a coordination point for substrate. ATP is bound at residue Gly299.

This sequence belongs to the class-II aminoacyl-tRNA synthetase family. EpmA subfamily. In terms of assembly, homodimer.

It catalyses the reaction D-beta-lysine + L-lysyl-[protein] + ATP = N(6)-((3R)-3,6-diaminohexanoyl)-L-lysyl-[protein] + AMP + diphosphate + H(+). With EpmB is involved in the beta-lysylation step of the post-translational modification of translation elongation factor P (EF-P). Catalyzes the ATP-dependent activation of (R)-beta-lysine produced by EpmB, forming a lysyl-adenylate, from which the beta-lysyl moiety is then transferred to the epsilon-amino group of a conserved specific lysine residue in EF-P. This is Elongation factor P--(R)-beta-lysine ligase from Vibrio cholerae serotype O1 (strain ATCC 39315 / El Tor Inaba N16961).